The following is a 340-amino-acid chain: MYSLARELLFKLSPETSHELSIDLIGAGGRLGLNGLLTKAPASLPTSVMGLQFANPVGLAAGLDKNGDAIDGFAQLGFGFVEIGTVTPRPQPGNPKPRLFRLPQAEAVINRMGFNNLGVDHLLERVKAAKYQGVLGINIGKNFDTPVERAVDDYLTCLDKVYAHASYVTVNVSSPNTPGLRSLQFGDSLKELLEALRRRQEDLTQEHGKRVPLAIKIAPDMSDEETALVASALLGADMDAVIATNTTLSREGVEGLAHADEAGGLSGSPVRDKSTHIVKVLAGELGGRLPIIAVGGITEGRHAAEKIAAGASLVQIYSGFIYKGPALIREAVDAIAALRK.

FMN is bound by residues 61–65 and Thr85; that span reads AGLDK. Residue Lys65 coordinates substrate. Residue 110-114 coordinates substrate; the sequence is NRMGF. The FMN site is built by Asn138 and Asn171. Asn171 contributes to the substrate binding site. The active-site Nucleophile is Ser174. Asn176 lines the substrate pocket. FMN contacts are provided by Lys216 and Thr244. 245–246 contacts substrate; it reads NT. FMN is bound by residues Gly267, Gly296, and 317-318; that span reads YS.

Belongs to the dihydroorotate dehydrogenase family. Type 2 subfamily. As to quaternary structure, monomer. FMN is required as a cofactor.

The protein localises to the cell membrane. It carries out the reaction (S)-dihydroorotate + a quinone = orotate + a quinol. Its pathway is pyrimidine metabolism; UMP biosynthesis via de novo pathway; orotate from (S)-dihydroorotate (quinone route): step 1/1. Functionally, catalyzes the conversion of dihydroorotate to orotate with quinone as electron acceptor. This is Dihydroorotate dehydrogenase (quinone) from Ectopseudomonas mendocina (strain ymp) (Pseudomonas mendocina).